We begin with the raw amino-acid sequence, 572 residues long: Urease subunit alpha (572 aa).

Residues 136–572 (GGIDTHIHWI…VPLAQRYFLF (437 aa)) form the Urease domain. Residues His-141, His-143, and Lys-224 each contribute to the Ni(2+) site. N6-carboxylysine is present on Lys-224. Residue His-226 coordinates substrate. Ni(2+)-binding residues include His-253 and His-279. His-327 serves as the catalytic Proton donor. Residue Asp-367 coordinates Ni(2+).

Belongs to the metallo-dependent hydrolases superfamily. Urease alpha subunit family. Heterotrimer of UreA (gamma), UreB (beta) and UreC (alpha) subunits. Three heterotrimers associate to form the active enzyme. It depends on Ni cation as a cofactor. Post-translationally, carboxylation allows a single lysine to coordinate two nickel ions.

The protein localises to the cytoplasm. The enzyme catalyses urea + 2 H2O + H(+) = hydrogencarbonate + 2 NH4(+). It participates in nitrogen metabolism; urea degradation; CO(2) and NH(3) from urea (urease route): step 1/1. The sequence is that of Urease subunit alpha from Actinobacillus pleuropneumoniae serotype 5b (strain L20).